The primary structure comprises 404 residues: Rhomboid-related protein 3 (404 aa).

EF-hand domains are found at residues 34–69 and 70–105; these read APED…HSSK and LDPH…KRSN. The next 7 membrane-spanning stretches (helical) occupy residues 164–184, 218–238, 250–270, 274–294, 303–325, 338–358, and 371–391; these read WFMI…GVSL, IFMH…LLVG, IGLV…VADM, VVGS…NIVM, FKLL…AVWL, PSFV…VVVL, and WWIF…WNIF. Catalysis depends on S278, which acts as the Nucleophile. H343 is an active-site residue.

It belongs to the peptidase S54 family.

The protein resides in the membrane. It catalyses the reaction Cleaves type-1 transmembrane domains using a catalytic dyad composed of serine and histidine that are contributed by different transmembrane domains.. May be involved in regulated intramembrane proteolysis and the subsequent release of functional polypeptides from their membrane anchors. This chain is Rhomboid-related protein 3 (RHBDL3), found in Homo sapiens (Human).